The sequence spans 547 residues: Threonine synthase (547 aa).

An N6-(pyridoxal phosphate)lysine modification is found at K117. Residues G272, N273, F274, D276, and T471 each coordinate pyridoxal 5'-phosphate.

It belongs to the threonine synthase family. The cofactor is pyridoxal 5'-phosphate.

It catalyses the reaction O-phospho-L-homoserine + H2O = L-threonine + phosphate. The protein operates within amino-acid biosynthesis; L-threonine biosynthesis; L-threonine from L-aspartate: step 5/5. Functionally, catalyzes the gamma-elimination of phosphate from L-phosphohomoserine and the beta-addition of water to produce L-threonine. The chain is Threonine synthase from Cryptococcus neoformans var. grubii serotype A (strain H99 / ATCC 208821 / CBS 10515 / FGSC 9487) (Filobasidiella neoformans var. grubii).